A 202-amino-acid chain; its full sequence is Recombination protein RecR (202 aa).

The C4-type zinc finger occupies 57 to 72; the sequence is CRDCRTFTEDDICAVC. The region spanning 81 to 176 is the Toprim domain; the sequence is GQICVVESPA…PATRIAHGVP (96 aa).

This sequence belongs to the RecR family.

Functionally, may play a role in DNA repair. It seems to be involved in an RecBC-independent recombinational process of DNA repair. It may act with RecF and RecO. This Photobacterium profundum (strain SS9) protein is Recombination protein RecR.